The following is a 207-amino-acid chain: Probable nicotinate-nucleotide adenylyltransferase (207 aa).

It belongs to the NadD family.

It carries out the reaction nicotinate beta-D-ribonucleotide + ATP + H(+) = deamido-NAD(+) + diphosphate. Its pathway is cofactor biosynthesis; NAD(+) biosynthesis; deamido-NAD(+) from nicotinate D-ribonucleotide: step 1/1. Catalyzes the reversible adenylation of nicotinate mononucleotide (NaMN) to nicotinic acid adenine dinucleotide (NaAD). The polypeptide is Probable nicotinate-nucleotide adenylyltransferase (Synechococcus sp. (strain JA-3-3Ab) (Cyanobacteria bacterium Yellowstone A-Prime)).